A 172-amino-acid chain; its full sequence is Ribosome maturation factor RimM (172 aa).

A PRC barrel domain is found at 99–171 (DDIPTWNYFI…LLTVEVPDGL (73 aa)).

Belongs to the RimM family. As to quaternary structure, binds ribosomal protein uS19.

The protein localises to the cytoplasm. An accessory protein needed during the final step in the assembly of 30S ribosomal subunit, possibly for assembly of the head region. Essential for efficient processing of 16S rRNA. May be needed both before and after RbfA during the maturation of 16S rRNA. It has affinity for free ribosomal 30S subunits but not for 70S ribosomes. This is Ribosome maturation factor RimM from Phocaeicola vulgatus (strain ATCC 8482 / DSM 1447 / JCM 5826 / CCUG 4940 / NBRC 14291 / NCTC 11154) (Bacteroides vulgatus).